Consider the following 180-residue polypeptide: Vacuolar ATPase assembly protein VMA22 (180 aa).

Residues 4–38 (QALREELDSKCLQLLSDLEELEAKRAALNARVEEG) adopt a coiled-coil conformation. Residues 90 to 113 (TPEEVGPSEASLRRRKGPTKTKEL) are disordered.

Accessory component of the multisubunit proton-transporting vacuolar (V)-ATPase protein pump. In terms of tissue distribution, predominantly expressed in the heart, liver, kidney and testis and at lower levels in the brain and lung. Undetectable in the spleen and muscles.

The protein resides in the endosome. Its subcellular location is the lysosome. The protein localises to the endoplasmic reticulum-Golgi intermediate compartment. It localises to the cytoplasmic vesicle. It is found in the COPI-coated vesicle. The protein resides in the endoplasmic reticulum. Accessory component of the proton-transporting vacuolar (V)-ATPase protein pump involved in intracellular iron homeostasis. In aerobic conditions, required for intracellular iron homeostasis, thus triggering the activity of Fe(2+) prolyl hydroxylase (PHD) enzymes, and leading to HIF1A hydroxylation and subsequent proteasomal degradation. Necessary for endolysosomal acidification and lysosomal degradation. May be involved in Golgi homeostasis. In Mus musculus (Mouse), this protein is Vacuolar ATPase assembly protein VMA22 (Vma22).